A 247-amino-acid chain; its full sequence is MVWQRPDGRKPYELRPINFHTKFTRFAPGSVLTICGETKVLCTVSVAESVPKFLAGSGKGWLTAEYRMLPSATQQRHERELLKLSGRTQEIQRLIGRSLRAAIDFEALGERTLTVDADVLQADAGTRTAAITGGFVALAEAISQLLQRGVLERSPLCGQVAAVSVGLLEQEAYLDLNYIEDVAATVDFNVVMNKNLGIIEVQGTAEEGSFSRTQLNQLLDCAETGIQQLLIAQQKAITDWDELFVGK.

Phosphate is bound by residues R87 and 125–127 (GTR).

This sequence belongs to the RNase PH family. As to quaternary structure, homohexameric ring arranged as a trimer of dimers.

The enzyme catalyses tRNA(n+1) + phosphate = tRNA(n) + a ribonucleoside 5'-diphosphate. In terms of biological role, phosphorolytic 3'-5' exoribonuclease that plays an important role in tRNA 3'-end maturation. Removes nucleotide residues following the 3'-CCA terminus of tRNAs; can also add nucleotides to the ends of RNA molecules by using nucleoside diphosphates as substrates, but this may not be physiologically important. Probably plays a role in initiation of 16S rRNA degradation (leading to ribosome degradation) during starvation. In Trichormus variabilis (strain ATCC 29413 / PCC 7937) (Anabaena variabilis), this protein is Ribonuclease PH.